The sequence spans 185 residues: Anterior gradient protein 2 (185 aa).

An N-terminal signal peptide occupies residues 1 to 18 (MQTGLSLACLVLLCSVLG). The segment at 25–45 (PKRQAGATDTNGAAKSEPAPV) is disordered.

This sequence belongs to the AGR family. Expressed in the anterior of the dorsal ectoderm from late gastrula stages onwards. Becomes restricted to the cement gland anlage at the onset of neurulation (stages 13 to 14) and expressed exclusively in the cement gland from stage 18 onwards, with transient expression in the hatching gland during tailbud stages.

It is found in the secreted. Involved in cement gland formation; probably specifies dorsal ectoderm to acquire an anterior fate such as cement gland and forebrain. Signals via the FGF pathway. This Xenopus laevis (African clawed frog) protein is Anterior gradient protein 2 (ag2).